A 362-amino-acid polypeptide reads, in one-letter code: Bifunctional chorismate mutase/prephenate dehydratase (362 aa).

The Chorismate mutase domain occupies 3 to 91 (QTIDELLIPH…ECLAVERPLT (89 aa)). 4 residues coordinate substrate: R13, R30, K41, and E52. The Prephenate dehydratase domain maps to 92-269 (IAYLGPQGTF…NTTRFLVMGH (178 aa)). The ACT domain occupies 281–356 (SLAVSAPNRA…RASFVKAIGS (76 aa)).

The protein resides in the cytoplasm. It carries out the reaction chorismate = prephenate. The enzyme catalyses prephenate + H(+) = 3-phenylpyruvate + CO2 + H2O. Its pathway is amino-acid biosynthesis; L-phenylalanine biosynthesis; phenylpyruvate from prephenate: step 1/1. The protein operates within metabolic intermediate biosynthesis; prephenate biosynthesis; prephenate from chorismate: step 1/1. Its function is as follows. Catalyzes the Claisen rearrangement of chorismate to prephenate and the decarboxylation/dehydration of prephenate to phenylpyruvate. The sequence is that of Bifunctional chorismate mutase/prephenate dehydratase (pheA) from Neisseria gonorrhoeae (strain ATCC 700825 / FA 1090).